A 292-amino-acid polypeptide reads, in one-letter code: Undecaprenyl-diphosphatase (292 aa).

7 consecutive transmembrane segments (helical) span residues 1–21, 46–66, 90–110, 114–134, 192–212, 225–245, and 253–273; these read MSLV…FLPV, FVTI…RADI, LGWY…LLEH, ALGN…LLAA, FLLS…STVP, VVGT…LLAW, and VFVV…LSGV.

This sequence belongs to the UppP family.

It is found in the cell inner membrane. It catalyses the reaction di-trans,octa-cis-undecaprenyl diphosphate + H2O = di-trans,octa-cis-undecaprenyl phosphate + phosphate + H(+). Catalyzes the dephosphorylation of undecaprenyl diphosphate (UPP). Confers resistance to bacitracin. This Anaeromyxobacter sp. (strain K) protein is Undecaprenyl-diphosphatase.